The chain runs to 293 residues: MTIQYYFDLIKPGIVLGNIISAISGFLLATHHEHHINYIILMYMILGTTLVIASSCVLNNIIDRDIDAIMDRTKNRVLAKNINSCFVKNSIIYAIILNTLGFLFLGLTKNLLTILLTMIGFLVYIGIYSLWMKRKSIYSTIIGSISGSMPPIIGYCTVSHTLDTGAWLLFIAFSFWQIPHSYSITIFRSQDYKKASIPTFNIKKGIKLTRIHMILCILIFTLANISLTVLGYTSYTFLYIISIMSIFWLYTGWYQYKQLDNDLKWAKKMFILSIVIITSLNVLLSLDSIFIFY.

9 helical membrane passes run 9–29 (LIKPGIVLGNIISAISGFLLA), 38–58 (YIILMYMILGTTLVIASSCVL), 86–106 (FVKNSIIYAIILNTLGFLFLG), 111–131 (LLTILLTMIGFLVYIGIYSLW), 137–157 (IYSTIIGSISGSMPPIIGYCT), 167–187 (WLLFIAFSFWQIPHSYSITIF), 211–231 (IHMILCILIFTLANISLTVLG), 234–254 (SYTFLYIISIMSIFWLYTGWY), and 271–291 (ILSIVIITSLNVLLSLDSIFI).

It belongs to the UbiA prenyltransferase family. Protoheme IX farnesyltransferase subfamily.

It localises to the cell inner membrane. The enzyme catalyses heme b + (2E,6E)-farnesyl diphosphate + H2O = Fe(II)-heme o + diphosphate. It participates in porphyrin-containing compound metabolism; heme O biosynthesis; heme O from protoheme: step 1/1. Its function is as follows. Converts heme B (protoheme IX) to heme O by substitution of the vinyl group on carbon 2 of heme B porphyrin ring with a hydroxyethyl farnesyl side group. This Blochmanniella floridana protein is Protoheme IX farnesyltransferase.